The sequence spans 154 residues: MRILGIDPGLARVGYGVIDTSGGHQRMLDCGIIRTDPGRSDGERMVEIASDLRQLIRAWRPELAAVEKFFFYRSSNTINVVQARGVVMMTLARFKVPVVEFPPMQIKLALAGFGHAEKDEVLEAVMRELDLTEPPRPDDAADALAVALTGWFQR.

Catalysis depends on residues Asp-7, Glu-67, and Asp-139. Mg(2+) contacts are provided by Asp-7, Glu-67, and Asp-139.

This sequence belongs to the RuvC family. In terms of assembly, homodimer which binds Holliday junction (HJ) DNA. The HJ becomes 2-fold symmetrical on binding to RuvC with unstacked arms; it has a different conformation from HJ DNA in complex with RuvA. In the full resolvosome a probable DNA-RuvA(4)-RuvB(12)-RuvC(2) complex forms which resolves the HJ. It depends on Mg(2+) as a cofactor.

Its subcellular location is the cytoplasm. It catalyses the reaction Endonucleolytic cleavage at a junction such as a reciprocal single-stranded crossover between two homologous DNA duplexes (Holliday junction).. In terms of biological role, the RuvA-RuvB-RuvC complex processes Holliday junction (HJ) DNA during genetic recombination and DNA repair. Endonuclease that resolves HJ intermediates. Cleaves cruciform DNA by making single-stranded nicks across the HJ at symmetrical positions within the homologous arms, yielding a 5'-phosphate and a 3'-hydroxyl group; requires a central core of homology in the junction. The consensus cleavage sequence is 5'-(A/T)TT(C/G)-3'. Cleavage occurs on the 3'-side of the TT dinucleotide at the point of strand exchange. HJ branch migration catalyzed by RuvA-RuvB allows RuvC to scan DNA until it finds its consensus sequence, where it cleaves and resolves the cruciform DNA. The chain is Crossover junction endodeoxyribonuclease RuvC from Parasynechococcus marenigrum (strain WH8102).